A 105-amino-acid polypeptide reads, in one-letter code: Flower-specific defensin (105 aa).

Positions 1 to 25 (MARSLCFMAFAILAMMLFVAYEVQA) are cleaved as a signal peptide. 4 disulfide bridges follow: cysteine 28/cysteine 72, cysteine 39/cysteine 59, cysteine 45/cysteine 66, and cysteine 49/cysteine 68. The propeptide at 73-105 (VFDEKMTKTGAEILAEEAKTLAAALLEEEIMDN) is removed in mature form.

This sequence belongs to the DEFL family. Most abundant in the epidermal cell layers of the petals and sepals, within the connective cells of the anthers, and the cortical cells of the style. Not detected in the tapetum, pollen mother cells, the transmitting tissue, the vascular bundles of the anther and style or in leaves. Expressed also in ovaries, but barley detectable in roots.

The protein resides in the secreted. It is found in the vacuole. Its function is as follows. Plant defense peptide with antifungal activity against F.oxysporum and B.cinerea. Retards the growth of the Lepidopteran insect pests H.armigera and H.punctigera. The chain is Flower-specific defensin (D1) from Nicotiana alata (Winged tobacco).